We begin with the raw amino-acid sequence, 218 residues long: Small ribosomal subunit protein uS3c (218 aa).

In terms of domain architecture, KH type-2 spans 47 to 118 (VQKHMRISSG…RLNIAIARVA (72 aa)).

This sequence belongs to the universal ribosomal protein uS3 family. As to quaternary structure, part of the 30S ribosomal subunit.

It is found in the plastid. It localises to the chloroplast. The chain is Small ribosomal subunit protein uS3c (rps3) from Nymphaea alba (White water-lily).